The following is a 318-amino-acid chain: Ferrochelatase (318 aa).

Residues His-186 and Glu-264 each coordinate Fe cation.

Belongs to the ferrochelatase family.

The protein resides in the cytoplasm. It catalyses the reaction heme b + 2 H(+) = protoporphyrin IX + Fe(2+). It functions in the pathway porphyrin-containing compound metabolism; protoheme biosynthesis; protoheme from protoporphyrin-IX: step 1/1. Functionally, catalyzes the ferrous insertion into protoporphyrin IX. In Chlamydia felis (strain Fe/C-56) (Chlamydophila felis), this protein is Ferrochelatase.